A 377-amino-acid polypeptide reads, in one-letter code: Chaperone protein DnaJ (377 aa).

The J domain maps to Asp-5–Gly-70. A CR-type zinc finger spans residues Gly-133–Thr-211. Residues Cys-146, Cys-149, Cys-163, Cys-166, Cys-185, Cys-188, Cys-199, and Cys-202 each contribute to the Zn(2+) site. 4 CXXCXGXG motif repeats span residues Cys-146–Gly-153, Cys-163–Gly-170, Cys-185–Gly-192, and Cys-199–Gly-206.

It belongs to the DnaJ family. Homodimer. Zn(2+) serves as cofactor.

The protein localises to the cytoplasm. Its function is as follows. Participates actively in the response to hyperosmotic and heat shock by preventing the aggregation of stress-denatured proteins and by disaggregating proteins, also in an autonomous, DnaK-independent fashion. Unfolded proteins bind initially to DnaJ; upon interaction with the DnaJ-bound protein, DnaK hydrolyzes its bound ATP, resulting in the formation of a stable complex. GrpE releases ADP from DnaK; ATP binding to DnaK triggers the release of the substrate protein, thus completing the reaction cycle. Several rounds of ATP-dependent interactions between DnaJ, DnaK and GrpE are required for fully efficient folding. Also involved, together with DnaK and GrpE, in the DNA replication of plasmids through activation of initiation proteins. The sequence is that of Chaperone protein DnaJ from Shewanella sp. (strain ANA-3).